The primary structure comprises 501 residues: Raftlin-2 (501 aa).

2 disordered regions span residues 1–20 (MGCG…GKIF) and 196–238 (SWNE…SRKG). A lipid anchor (N-myristoyl glycine) is attached at G2. The S-palmitoyl cysteine moiety is linked to residue C3. Residues 224–233 (MEQNGSPSSS) are compositionally biased toward polar residues. S405 bears the Phosphoserine mark. Residues 407–454 (AQTTDKKASRRIKGEDKNKATSRSIGLDTTTPQPAESRHPPEECRLSP) are disordered. Phosphothreonine is present on T409. Residues 410–425 (TDKKASRRIKGEDKNK) are compositionally biased toward basic and acidic residues. The span at 427–440 (TSRSIGLDTTTPQP) shows a compositional bias: polar residues. S430 carries the phosphoserine modification. Residues 442–451 (ESRHPPEECR) are compositionally biased toward basic and acidic residues.

Belongs to the raftlin family.

The protein resides in the cell membrane. Upon bacterial lipopolysaccharide stimulation, mediates clathrin-dependent internalization of TLR4 in dendritic cells, resulting in activation of TICAM1-mediated signaling and subsequent IFNB1 production. May regulate B-cell antigen receptor mediated-signaling. The polypeptide is Raftlin-2 (RFTN2) (Pongo abelii (Sumatran orangutan)).